Consider the following 301-residue polypeptide: 4-hydroxybenzoate octaprenyltransferase (301 aa).

A run of 7 helical transmembrane segments spans residues 34 to 54 (IGSL…AGGL), 57 to 77 (LWTL…GCVI), 108 to 128 (LWVF…LNWL), 163 to 183 (WGIP…AWLL), 222 to 242 (DLIA…LVGL), 248 to 268 (IAYW…FHIA), and 280 to 300 (FLHN…SLAL).

This sequence belongs to the UbiA prenyltransferase family. The cofactor is Mg(2+).

The protein resides in the cell inner membrane. It carries out the reaction all-trans-octaprenyl diphosphate + 4-hydroxybenzoate = 4-hydroxy-3-(all-trans-octaprenyl)benzoate + diphosphate. It functions in the pathway cofactor biosynthesis; ubiquinone biosynthesis. In terms of biological role, catalyzes the prenylation of para-hydroxybenzoate (PHB) with an all-trans polyprenyl group. Mediates the second step in the final reaction sequence of ubiquinone-8 (UQ-8) biosynthesis, which is the condensation of the polyisoprenoid side chain with PHB, generating the first membrane-bound Q intermediate 3-octaprenyl-4-hydroxybenzoate. The sequence is that of 4-hydroxybenzoate octaprenyltransferase from Xanthomonas campestris pv. campestris (strain 8004).